The chain runs to 426 residues: Glucose-6-phosphate isomerase (426 aa).

The Proton donor role is filled by E276. Residues H297 and K413 contribute to the active site.

This sequence belongs to the GPI family.

It is found in the cytoplasm. It carries out the reaction alpha-D-glucose 6-phosphate = beta-D-fructose 6-phosphate. It functions in the pathway carbohydrate biosynthesis; gluconeogenesis. The protein operates within carbohydrate degradation; glycolysis; D-glyceraldehyde 3-phosphate and glycerone phosphate from D-glucose: step 2/4. In terms of biological role, catalyzes the reversible isomerization of glucose-6-phosphate to fructose-6-phosphate. The polypeptide is Glucose-6-phosphate isomerase (Mesoplasma florum (strain ATCC 33453 / NBRC 100688 / NCTC 11704 / L1) (Acholeplasma florum)).